The following is a 354-amino-acid chain: Holliday junction branch migration complex subunit RuvB (354 aa).

Over residues 1–10 the composition is skewed to polar residues; sequence MAIKRNQGSN. The tract at residues 1 to 36 is disordered; sequence MAIKRNQGSNPKPEKKERLTKAETHQEQDNLEESIR. The span at 12–36 shows a compositional bias: basic and acidic residues; it reads KPEKKERLTKAETHQEQDNLEESIR. The large ATPase domain (RuvB-L) stretch occupies residues 13–196; sequence PEKKERLTKA…FGLIQRLKFY (184 aa). ATP is bound by residues Ile-35, Arg-36, Gly-77, Lys-80, Thr-81, Thr-82, 143–145, Arg-186, Tyr-196, and Arg-233; that span reads EDY. Position 81 (Thr-81) interacts with Mg(2+). Residues 197–267 are small ATPAse domain (RuvB-S); it reads EPEELALIIK…LAAEALDIYQ (71 aa). Residues 270-354 form a head domain (RuvB-H) region; the sequence is PQGLDWTDRL…EEQLSIFSEQ (85 aa). Positions 325 and 330 each coordinate DNA.

The protein belongs to the RuvB family. In terms of assembly, homohexamer. Forms an RuvA(8)-RuvB(12)-Holliday junction (HJ) complex. HJ DNA is sandwiched between 2 RuvA tetramers; dsDNA enters through RuvA and exits via RuvB. An RuvB hexamer assembles on each DNA strand where it exits the tetramer. Each RuvB hexamer is contacted by two RuvA subunits (via domain III) on 2 adjacent RuvB subunits; this complex drives branch migration. In the full resolvosome a probable DNA-RuvA(4)-RuvB(12)-RuvC(2) complex forms which resolves the HJ.

The protein resides in the cytoplasm. It carries out the reaction ATP + H2O = ADP + phosphate + H(+). The RuvA-RuvB-RuvC complex processes Holliday junction (HJ) DNA during genetic recombination and DNA repair, while the RuvA-RuvB complex plays an important role in the rescue of blocked DNA replication forks via replication fork reversal (RFR). RuvA specifically binds to HJ cruciform DNA, conferring on it an open structure. The RuvB hexamer acts as an ATP-dependent pump, pulling dsDNA into and through the RuvAB complex. RuvB forms 2 homohexamers on either side of HJ DNA bound by 1 or 2 RuvA tetramers; 4 subunits per hexamer contact DNA at a time. Coordinated motions by a converter formed by DNA-disengaged RuvB subunits stimulates ATP hydrolysis and nucleotide exchange. Immobilization of the converter enables RuvB to convert the ATP-contained energy into a lever motion, pulling 2 nucleotides of DNA out of the RuvA tetramer per ATP hydrolyzed, thus driving DNA branch migration. The RuvB motors rotate together with the DNA substrate, which together with the progressing nucleotide cycle form the mechanistic basis for DNA recombination by continuous HJ branch migration. Branch migration allows RuvC to scan DNA until it finds its consensus sequence, where it cleaves and resolves cruciform DNA. The chain is Holliday junction branch migration complex subunit RuvB from Crocosphaera subtropica (strain ATCC 51142 / BH68) (Cyanothece sp. (strain ATCC 51142)).